A 236-amino-acid chain; its full sequence is 2,3,4,5-tetrahydropyridine-2,6-dicarboxylate N-acetyltransferase (236 aa).

The protein belongs to the transferase hexapeptide repeat family. DapH subfamily.

The enzyme catalyses (S)-2,3,4,5-tetrahydrodipicolinate + acetyl-CoA + H2O = L-2-acetamido-6-oxoheptanedioate + CoA. It functions in the pathway amino-acid biosynthesis; L-lysine biosynthesis via DAP pathway; LL-2,6-diaminopimelate from (S)-tetrahydrodipicolinate (acetylase route): step 1/3. Its function is as follows. Catalyzes the transfer of an acetyl group from acetyl-CoA to tetrahydrodipicolinate. The protein is 2,3,4,5-tetrahydropyridine-2,6-dicarboxylate N-acetyltransferase of Bacillus licheniformis (strain ATCC 14580 / DSM 13 / JCM 2505 / CCUG 7422 / NBRC 12200 / NCIMB 9375 / NCTC 10341 / NRRL NRS-1264 / Gibson 46).